The sequence spans 476 residues: Chromosomal replication initiator protein DnaA (476 aa).

Residues 1 to 75 form a domain I, interacts with DnaA modulators region; sequence MLAPDTFWLA…TQMAENHFAR (75 aa). The tract at residues 75–139 is domain II; sequence RPVQLQLELA…AKEKQEKNPT (65 aa). A disordered region spans residues 110 to 141; that stretch reads FDAPTESAQKAPKDTKDTKDAKEKQEKNPTRL. Basic and acidic residues predominate over residues 120 to 138; that stretch reads APKDTKDTKDAKEKQEKNP. Residues 140–356 are domain III, AAA+ region; it reads RLNPSFTFNT…GALKRVVAYS (217 aa). Residues Gly184, Gly186, Lys187, and Thr188 each coordinate ATP. The segment at 357–476 is domain IV, binds dsDNA; it reads RFTGHALTLD…FNTLLHILRG (120 aa).

It belongs to the DnaA family. As to quaternary structure, oligomerizes as a right-handed, spiral filament on DNA at oriC.

It localises to the cytoplasm. Functionally, plays an essential role in the initiation and regulation of chromosomal replication. ATP-DnaA binds to the origin of replication (oriC) to initiate formation of the DNA replication initiation complex once per cell cycle. Binds the DnaA box (a 9 base pair repeat at the origin) and separates the double-stranded (ds)DNA. Forms a right-handed helical filament on oriC DNA; dsDNA binds to the exterior of the filament while single-stranded (ss)DNA is stabiized in the filament's interior. The ATP-DnaA-oriC complex binds and stabilizes one strand of the AT-rich DNA unwinding element (DUE), permitting loading of DNA polymerase. After initiation quickly degrades to an ADP-DnaA complex that is not apt for DNA replication. Binds acidic phospholipids. This Nitrosospira multiformis (strain ATCC 25196 / NCIMB 11849 / C 71) protein is Chromosomal replication initiator protein DnaA.